The primary structure comprises 336 residues: Ketol-acid reductoisomerase (NADP(+)) 1 (336 aa).

The region spanning 2 to 181 is the KARI N-terminal Rossmann domain; sequence AKVYYEKDVT…GATRAGVLET (180 aa). NADP(+)-binding positions include 25-28, Arg-48, Ser-52, and 82-85; these read YGSQ and DELQ. His-107 is an active-site residue. Gly-133 contributes to the NADP(+) binding site. The 146-residue stretch at 182-327 folds into the KARI C-terminal knotted domain; the sequence is TFKEETETDL…RKLRGMMPFV (146 aa). Residues Asp-190, Glu-194, Glu-226, and Glu-230 each contribute to the Mg(2+) site. Residue Ser-251 coordinates substrate.

Belongs to the ketol-acid reductoisomerase family. Requires Mg(2+) as cofactor.

The enzyme catalyses (2R)-2,3-dihydroxy-3-methylbutanoate + NADP(+) = (2S)-2-acetolactate + NADPH + H(+). The catalysed reaction is (2R,3R)-2,3-dihydroxy-3-methylpentanoate + NADP(+) = (S)-2-ethyl-2-hydroxy-3-oxobutanoate + NADPH + H(+). It functions in the pathway amino-acid biosynthesis; L-isoleucine biosynthesis; L-isoleucine from 2-oxobutanoate: step 2/4. It participates in amino-acid biosynthesis; L-valine biosynthesis; L-valine from pyruvate: step 2/4. In terms of biological role, involved in the biosynthesis of branched-chain amino acids (BCAA). Catalyzes an alkyl-migration followed by a ketol-acid reduction of (S)-2-acetolactate (S2AL) to yield (R)-2,3-dihydroxy-isovalerate. In the isomerase reaction, S2AL is rearranged via a Mg-dependent methyl migration to produce 3-hydroxy-3-methyl-2-ketobutyrate (HMKB). In the reductase reaction, this 2-ketoacid undergoes a metal-dependent reduction by NADPH to yield (R)-2,3-dihydroxy-isovalerate. This Bacillus anthracis protein is Ketol-acid reductoisomerase (NADP(+)) 1.